The following is a 300-amino-acid chain: F-box associated domain-containing protein sdz-33 (300 aa).

The 47-residue stretch at 5–51 (PFPILCLPDFVLQKSLKLMGVVEHLCLSILSKNIKQLIATLKGYPKC) folds into the F-box domain.

In terms of tissue distribution, expressed in D-type motor neuron cell bodies.

Its function is as follows. Substrate recognition component of E3 ubiquitin-protein ligase complex which mediates the ubiquitination and subsequent proteasomal degradation of target proteins such as mdl-1. Positively regulates axon regeneration by targeting mdl-1 for ubiquitin-mediated degradation; probably thereby reducing levels of mdl-1-mxl-1 heterodimers, allowing free mxl-1 to form complexes with tdpt-1 and thus inhibiting tdpt-1-dependent sumoylation of ets-4. This chain is F-box associated domain-containing protein sdz-33, found in Caenorhabditis elegans.